A 334-amino-acid polypeptide reads, in one-letter code: GTPase Obg (334 aa).

The 159-residue stretch at 4 to 162 (FDFIDEVKKY…GWIKLELKLL (159 aa)) folds into the Obg domain. Residues 163–330 (AEVGLVGFPN…FKDKIWKLLH (168 aa)) form the OBG-type G domain. Residues 169–176 (GFPNAGKS), 194–198 (FTTLV), 216–219 (DMPG), 284–287 (SKLD), and 311–313 (SSV) contribute to the GTP site. Positions 176 and 196 each coordinate Mg(2+).

It belongs to the TRAFAC class OBG-HflX-like GTPase superfamily. OBG GTPase family. Monomer. Mg(2+) serves as cofactor.

Its subcellular location is the cytoplasm. Functionally, an essential GTPase which binds GTP, GDP and possibly (p)ppGpp with moderate affinity, with high nucleotide exchange rates and a fairly low GTP hydrolysis rate. Plays a role in control of the cell cycle, stress response, ribosome biogenesis and in those bacteria that undergo differentiation, in morphogenesis control. In Amoebophilus asiaticus (strain 5a2), this protein is GTPase Obg.